The following is a 107-amino-acid chain: Phosphoribosyl-ATP pyrophosphatase (107 aa).

This sequence belongs to the PRA-PH family.

The protein localises to the cytoplasm. The catalysed reaction is 1-(5-phospho-beta-D-ribosyl)-ATP + H2O = 1-(5-phospho-beta-D-ribosyl)-5'-AMP + diphosphate + H(+). Its pathway is amino-acid biosynthesis; L-histidine biosynthesis; L-histidine from 5-phospho-alpha-D-ribose 1-diphosphate: step 2/9. This Bacillus cereus (strain G9842) protein is Phosphoribosyl-ATP pyrophosphatase.